A 488-amino-acid chain; its full sequence is Putative BPI/LBP family protein At1g04970 (488 aa).

The signal sequence occupies residues 1 to 24; that stretch reads MDVGRCFLFLLLPSFFFLPSQTQS. N-linked (GlcNAc...) asparagine glycosylation is found at Asn-79, Asn-109, Asn-231, Asn-242, and Asn-341.

Belongs to the BPI/LBP/Plunc superfamily. BPI/LBP (TC 1.C.40) family.

This Arabidopsis thaliana (Mouse-ear cress) protein is Putative BPI/LBP family protein At1g04970.